Here is a 588-residue protein sequence, read N- to C-terminus: Putative calcium-binding mitochondrial carrier F55A11.4 (588 aa).

Residues 1–14 (MINKNEQTESTSGA) are compositionally biased toward polar residues. Positions 1-25 (MINKNEQTESTSGAAEQKEDDEEQY) are disordered. EF-hand domains lie at 73–108 (EKER…ETPH), 109–139 (IPAN…SYVL), 140–175 (ENEQ…IGVP), and 176–211 (LDDH…YPSS). Residues D86, D88, D90, T92, and D97 each contribute to the Ca(2+) site. Positions 153, 155, 157, and 164 each coordinate Ca(2+). Solcar repeat units follow at residues 246–332 (GIWW…LKRL), 342–428 (ISTF…LKRT), and 440–529 (PGVL…VRTG). Helical transmembrane passes span 252–269 (LVAG…TAPF), 307–326 (GNGI…FMCY), 352–365 (SAAG…IYPM), 403–422 (GYLP…LAIY), 446–463 (LACG…SYPF), and 504–523 (GITP…YVVY).

Belongs to the mitochondrial carrier (TC 2.A.29) family. Homodimer (via N-terminus).

It localises to the mitochondrion inner membrane. Functionally, mitochondrial and calcium-binding carrier that catalyzes the calcium-dependent exchange of cytoplasmic glutamate with mitochondrial aspartate across the mitochondrial inner membrane. This is Putative calcium-binding mitochondrial carrier F55A11.4 from Caenorhabditis elegans.